The sequence spans 229 residues: Triosephosphate isomerase (229 aa).

6 to 8 (NFK) provides a ligand contact to substrate. His-88 serves as the catalytic Electrophile. Glu-157 functions as the Proton acceptor in the catalytic mechanism. Gly-163 and Ser-193 together coordinate substrate.

Belongs to the triosephosphate isomerase family. In terms of assembly, homodimer.

The protein localises to the cytoplasm. The enzyme catalyses D-glyceraldehyde 3-phosphate = dihydroxyacetone phosphate. Its pathway is carbohydrate biosynthesis; gluconeogenesis. It functions in the pathway carbohydrate degradation; glycolysis; D-glyceraldehyde 3-phosphate from glycerone phosphate: step 1/1. In terms of biological role, involved in the gluconeogenesis. Catalyzes stereospecifically the conversion of dihydroxyacetone phosphate (DHAP) to D-glyceraldehyde-3-phosphate (G3P). In Sulfurovum sp. (strain NBC37-1), this protein is Triosephosphate isomerase.